The sequence spans 282 residues: 3-methyl-2-oxobutanoate hydroxymethyltransferase (282 aa).

Mg(2+) is bound by residues Asp-46 and Asp-85. Residues 46–47 (DS), Asp-85, and Lys-115 contribute to the 3-methyl-2-oxobutanoate site. Glu-117 lines the Mg(2+) pocket. The active-site Proton acceptor is Glu-184.

Belongs to the PanB family. Homodecamer; pentamer of dimers. It depends on Mg(2+) as a cofactor.

The protein resides in the cytoplasm. The enzyme catalyses 3-methyl-2-oxobutanoate + (6R)-5,10-methylene-5,6,7,8-tetrahydrofolate + H2O = 2-dehydropantoate + (6S)-5,6,7,8-tetrahydrofolate. The protein operates within cofactor biosynthesis; (R)-pantothenate biosynthesis; (R)-pantoate from 3-methyl-2-oxobutanoate: step 1/2. Its function is as follows. Catalyzes the reversible reaction in which hydroxymethyl group from 5,10-methylenetetrahydrofolate is transferred onto alpha-ketoisovalerate to form ketopantoate. The protein is 3-methyl-2-oxobutanoate hydroxymethyltransferase of Alkaliphilus metalliredigens (strain QYMF).